The primary structure comprises 116 residues: Flagellar transcriptional regulator FlhD (116 aa).

This sequence belongs to the FlhD family. In terms of assembly, homodimer; disulfide-linked. Forms a heterohexamer composed of two FlhC and four FlhD subunits. Each FlhC binds a FlhD dimer, forming a heterotrimer, and a hexamer assembles by dimerization of two heterotrimers.

The protein localises to the cytoplasm. Its function is as follows. Functions in complex with FlhC as a master transcriptional regulator that regulates transcription of several flagellar and non-flagellar operons by binding to their promoter region. Activates expression of class 2 flagellar genes, including fliA, which is a flagellum-specific sigma factor that turns on the class 3 genes. Also regulates genes whose products function in a variety of physiological pathways. The protein is Flagellar transcriptional regulator FlhD of Escherichia coli O157:H7.